The following is a 59-amino-acid chain: MNFKLIFLVALVLMAAFLGQTEGRRFKKFLKKVEGAGRRVANAAQKGLPLAAGVKGLVG.

The N-terminal stretch at 1-23 is a signal peptide; that stretch reads MNFKLIFLVALVLMAAFLGQTEG. At Val58 the chain carries Valine amide.

The protein belongs to the cecropin family.

It is found in the secreted. In terms of biological role, cecropins have lytic and antibacterial activity against several Gram-positive and Gram-negative bacteria. This is Cecropin-C (CecC) from Anopheles gambiae (African malaria mosquito).